The primary structure comprises 170 residues: Protein SprT (170 aa).

Residues 19–163 form the SprT-like domain; the sequence is REKLQQANLR…RCLHCGTSLR (145 aa). Position 78 (H78) interacts with Zn(2+). Residue E79 is part of the active site. H82 lines the Zn(2+) pocket.

Belongs to the SprT family. The cofactor is Zn(2+).

The protein localises to the cytoplasm. This is Protein SprT from Erwinia tasmaniensis (strain DSM 17950 / CFBP 7177 / CIP 109463 / NCPPB 4357 / Et1/99).